Reading from the N-terminus, the 253-residue chain is Probable transcriptional regulatory protein slr0989 (253 aa).

Residues methionine 1–lysine 22 are disordered.

It belongs to the TACO1 family.

Its subcellular location is the cytoplasm. The chain is Probable transcriptional regulatory protein slr0989 from Synechocystis sp. (strain ATCC 27184 / PCC 6803 / Kazusa).